A 1052-amino-acid chain; its full sequence is uncharacterized protein (1052 aa).

The Helicase ATP-binding domain maps to 389-561 (WINKGKTFAI…NKGGNYIMIN (173 aa)). 400–407 (SAMGTGKT) lines the ATP pocket.

Belongs to the mimivirus R1 family.

This is an uncharacterized protein from Acanthamoeba polyphaga mimivirus (APMV).